The following is a 92-amino-acid chain: Actobindin-A (92 aa).

Disordered regions lie at residues Met-1–Asp-33 and Leu-54–Ser-92. WH2 domains lie at Ala-3–Thr-20 and Asp-40–Ala-57. 2 stretches are compositionally biased toward basic and acidic residues: residues Lys-13–Asp-33 and Leu-54–Ala-64. The span at Asn-68–Ser-79 shows a compositional bias: polar residues.

As to quaternary structure, monomer.

Its function is as follows. Is able to bind two actin monomers at high concentrations of G-actin. Inhibits actin polymerization by sequestering G-actin and stabilizing actin dimers. This is Actobindin-A (abnA) from Dictyostelium discoideum (Social amoeba).